We begin with the raw amino-acid sequence, 636 residues long: LDL receptor repeat-containing protein egg-1 (636 aa).

Residues 1-130 lie on the Cytoplasmic side of the membrane; sequence MSSIAQKNRN…NHSNLFQCPS (130 aa). A helical; Signal-anchor for type II membrane protein membrane pass occupies residues 131 to 151; it reads VAIVLVLALVILGVLAAIPLT. Over 152-636 the chain is Extracellular; it reads LMLTSSAQKM…VLKNSGRFPY (485 aa). The N-linked (GlcNAc...) asparagine glycan is linked to N202. LDL-receptor class A domains lie at 205–243, 244–296, 298–335, 336–375, 378–415, 457–499, 503–541, and 542–579; these read TCSGFGFACTGAVHMVIPSSKRCDGFKDCQDGSDEENCK, ECQS…AMCK, TCSKDQFKCNGSNACLPLSAKCDGVKDCSDGSDENNCN, KCQKGAHVSLVSRNIKHLFASHVCDGVAQCADRSDEQQCD, TCSGSDKALCDDGTCIKRSQVCDGKKDCSDGMDEENCP, KCHP…KNCT, ECGIDNASQFTCDRKCVDASRRCDGVWDCEDKSDEQNCS, and QCASGSIKCSADKKCLPAYTRCNGVAECSDGSDELKCS. Intrachain disulfides connect C213-C233, C227-C242, C245-C273, C251-C286, C280-C295, C299-C312, C306-C325, C319-C334, C337-C365, C359-C374, C379-C392, C387-C405, C399-C414, C458-C476, C466-C489, C483-C498, C504-C518, C514-C531, C525-C540, C543-C556, C550-C569, and C563-C578. Residue N508 is glycosylated (N-linked (GlcNAc...) asparagine). N614 carries N-linked (GlcNAc...) asparagine glycosylation.

Its subcellular location is the cell membrane. Functionally, probable receptor which is required for the oocyte-to-zygote transition although its exact function is controversial. Seems to be required for fertilization probably by promoting the interaction or fusion between sperm and oocyte. Conversely, shown to be dispensable for fertilization but required for the formation of a continuous and cohesive eggshell chitin layer by maintaining a homogenous distribution of chitin synthase chs-1 at the unfertilized oocyte cell membrane. Appears to recruit or maintain together to the unfertilized oocyte cortex several proteins including chs-1, kinase mbk-2 and pseudophosphatases egg-3, and possibly egg-4 and egg-5. This Caenorhabditis briggsae protein is LDL receptor repeat-containing protein egg-1.